A 215-amino-acid polypeptide reads, in one-letter code: uncharacterized protein (215 aa).

This is an uncharacterized protein from Escherichia coli (strain K12).